The following is a 248-amino-acid chain: Cytochrome c oxidase subunit 2 (248 aa).

Residues 1-12 (MLLMNLFTIINN) form the signal peptide. Over 13 to 39 (DVPTPYNMYFQDSTTPHQEGILELHDN) the chain is Mitochondrial intermembrane. A helical membrane pass occupies residues 40–61 (IMFYMLTVLGLVSWMMIIIIKD). At 62 to 79 (YKNNPITYKYIKHGQMIE) the chain is on the mitochondrial matrix side. A helical membrane pass occupies residues 80-104 (IIWTILPAIILLMIAFPSFILLYLC). The Mitochondrial intermembrane segment spans residues 105–248 (DEVISPAMTI…PTFLTWLNEQ (144 aa)). Residues His183, Cys218, Glu220, Cys222, His226, and Met229 each contribute to the Cu cation site. Residue Glu220 participates in Mg(2+) binding.

This sequence belongs to the cytochrome c oxidase subunit 2 family. In terms of assembly, component of the cytochrome c oxidase (complex IV, CIV), a multisubunit enzyme composed of a catalytic core of 3 subunits and several supernumerary subunits. The complex exists as a monomer or a dimer and forms supercomplexes (SCs) in the inner mitochondrial membrane with ubiquinol-cytochrome c oxidoreductase (cytochrome b-c1 complex, complex III, CIII). Cu cation is required as a cofactor. Post-translationally, the signal sequence of COX2 is processed by IMP1.

It localises to the mitochondrion inner membrane. The enzyme catalyses 4 Fe(II)-[cytochrome c] + O2 + 8 H(+)(in) = 4 Fe(III)-[cytochrome c] + 2 H2O + 4 H(+)(out). Component of the cytochrome c oxidase, the last enzyme in the mitochondrial electron transport chain which drives oxidative phosphorylation. The respiratory chain contains 3 multisubunit complexes succinate dehydrogenase (complex II, CII), ubiquinol-cytochrome c oxidoreductase (cytochrome b-c1 complex, complex III, CIII) and cytochrome c oxidase (complex IV, CIV), that cooperate to transfer electrons derived from NADH and succinate to molecular oxygen, creating an electrochemical gradient over the inner membrane that drives transmembrane transport and the ATP synthase. Cytochrome c oxidase is the component of the respiratory chain that catalyzes the reduction of oxygen to water. Electrons originating from reduced cytochrome c in the intermembrane space (IMS) are transferred via the dinuclear copper A center (CU(A)) of subunit 2 and heme A of subunit 1 to the active site in subunit 1, a binuclear center (BNC) formed by heme A3 and copper B (CU(B)). The BNC reduces molecular oxygen to 2 water molecules using 4 electrons from cytochrome c in the IMS and 4 protons from the mitochondrial matrix. This chain is Cytochrome c oxidase subunit 2 (COX2), found in Eremothecium gossypii (strain ATCC 10895 / CBS 109.51 / FGSC 9923 / NRRL Y-1056) (Yeast).